A 546-amino-acid chain; its full sequence is Pyridine nucleotide-disulfide oxidoreductase domain-containing protein 1 (546 aa).

This sequence belongs to the class-I pyridine nucleotide-disulfide oxidoreductase family. PYROXD1 subfamily. Requires FAD as cofactor.

The protein is Pyridine nucleotide-disulfide oxidoreductase domain-containing protein 1 (pyroxd1) of Dictyostelium discoideum (Social amoeba).